Here is a 228-residue protein sequence, read N- to C-terminus: UPF0758 protein CLD_1541 (228 aa).

The 123-residue stretch at Lys106–Ile228 folds into the MPN domain. Positions 177, 179, and 190 each coordinate Zn(2+). Positions His177 to Asp190 match the JAMM motif motif.

It belongs to the UPF0758 family.

The chain is UPF0758 protein CLD_1541 from Clostridium botulinum (strain Okra / Type B1).